The following is a 574-amino-acid chain: 2-succinyl-5-enolpyruvyl-6-hydroxy-3-cyclohexene-1-carboxylate synthase (574 aa).

Belongs to the TPP enzyme family. MenD subfamily. As to quaternary structure, homodimer. Requires Mg(2+) as cofactor. It depends on Mn(2+) as a cofactor. The cofactor is thiamine diphosphate.

It carries out the reaction isochorismate + 2-oxoglutarate + H(+) = 5-enolpyruvoyl-6-hydroxy-2-succinyl-cyclohex-3-ene-1-carboxylate + CO2. Its pathway is quinol/quinone metabolism; 1,4-dihydroxy-2-naphthoate biosynthesis; 1,4-dihydroxy-2-naphthoate from chorismate: step 2/7. It functions in the pathway quinol/quinone metabolism; menaquinone biosynthesis. Its function is as follows. Catalyzes the thiamine diphosphate-dependent decarboxylation of 2-oxoglutarate and the subsequent addition of the resulting succinic semialdehyde-thiamine pyrophosphate anion to isochorismate to yield 2-succinyl-5-enolpyruvyl-6-hydroxy-3-cyclohexene-1-carboxylate (SEPHCHC). This chain is 2-succinyl-5-enolpyruvyl-6-hydroxy-3-cyclohexene-1-carboxylate synthase, found in Rubrobacter xylanophilus (strain DSM 9941 / JCM 11954 / NBRC 16129 / PRD-1).